Here is a 596-residue protein sequence, read N- to C-terminus: MENIRNFCIIAHIDHGKSTLADRLLEFTSTVSNRQMQAQVLDDMDLERERGITIKSHAIQMNYIYEGQKYVLNLIDTPGHVDFSYEVSRSIAACEGALLIVDAAQGIEAQTISNLYLALENDLEIIPVLNKIDLPGAMPEEVKDQVVELLGCDRDSIIPASGKEGIGIFEILAAIIQRIPPPKGDPKAPLQALIFDSQFNSFRGIEVMFRIFNGTIKKGDKVKFINIGKEYYADEIGVLKLQQEPQLEMSAGNVGYIISGIKEAKDVKVGDTITHVSRPGEPIQGFADVKPMVFAGIYPVETSEFEDLRAAMEKLQLNDASLVWEPETSIALGFGFRCGFLGMLHMEIVQERLEREFDMTVITTVPSVQFKAYLTKGNEMVVVNAPSDMPEPTTLDYIEEPYIKAQIITKADFVGPVISLCMDKRGIITNQTYLTSDRVELTFELPLAEIVFDFFDKLKTISKGYASLDYELIGFRESNVIKLDIMLNGEKVDALSAIVHRDKAYDWGKRLCEKLKDLIPMQMFEIAVQAAIGQKIIARETVKAMRKNVLAKCYGGDISRKRKLLEKQKKGKKRMRQVGNVEIPQAAFMAILKLDQ.

One can recognise a tr-type G domain in the interval 2 to 183 (ENIRNFCIIA…AIIQRIPPPK (182 aa)). Residues 14–19 (DHGKST) and 130–133 (NKID) each bind GTP.

Belongs to the TRAFAC class translation factor GTPase superfamily. Classic translation factor GTPase family. LepA subfamily.

It localises to the cell inner membrane. The enzyme catalyses GTP + H2O = GDP + phosphate + H(+). Required for accurate and efficient protein synthesis under certain stress conditions. May act as a fidelity factor of the translation reaction, by catalyzing a one-codon backward translocation of tRNAs on improperly translocated ribosomes. Back-translocation proceeds from a post-translocation (POST) complex to a pre-translocation (PRE) complex, thus giving elongation factor G a second chance to translocate the tRNAs correctly. Binds to ribosomes in a GTP-dependent manner. This Cytophaga hutchinsonii (strain ATCC 33406 / DSM 1761 / CIP 103989 / NBRC 15051 / NCIMB 9469 / D465) protein is Elongation factor 4.